Consider the following 551-residue polypeptide: Probable glucomannan 4-beta-mannosyltransferase 3 (551 aa).

A helical transmembrane segment spans residues 60–80; the sequence is ACLALSAMLLADAVLMAAACF. Residue D154 is part of the active site. Residues D213 and D215 each coordinate substrate. The active site involves D307. Transmembrane regions (helical) follow at residues 386–406, 409–429, 504–524, and 525–545; these read VVAHVVPFMLYCVVIPFSVLI, VTVPVWGVVYVPTTITLLHAI, ILFSIFLFFCATYNLAYGGDY, and YFVYIYLQAIAFLVVGIGFCG.

It belongs to the glycosyltransferase 2 family. Plant cellulose synthase-like A subfamily.

It localises to the golgi apparatus membrane. It catalyses the reaction GDP-mannose + (glucomannan)n = GDP + (glucomannan)n+1.. In terms of biological role, probable mannan synthase which consists of a 4-beta-mannosyltransferase activity on mannan using GDP-mannose. The beta-1,4-mannan product is the backbone for galactomannan synthesis by galactomannan galactosyltransferase. Galactomannan is a noncellulosic polysaccharides of plant cell wall. This Oryza sativa subsp. japonica (Rice) protein is Probable glucomannan 4-beta-mannosyltransferase 3.